Consider the following 185-residue polypeptide: Ribosome-recycling factor (185 aa).

It belongs to the RRF family.

The protein localises to the cytoplasm. Responsible for the release of ribosomes from messenger RNA at the termination of protein biosynthesis. May increase the efficiency of translation by recycling ribosomes from one round of translation to another. The protein is Ribosome-recycling factor of Pseudarthrobacter chlorophenolicus (strain ATCC 700700 / DSM 12829 / CIP 107037 / JCM 12360 / KCTC 9906 / NCIMB 13794 / A6) (Arthrobacter chlorophenolicus).